Reading from the N-terminus, the 251-residue chain is Aspartate/glutamate leucyltransferase (251 aa).

It belongs to the R-transferase family. Bpt subfamily.

Its subcellular location is the cytoplasm. It catalyses the reaction N-terminal L-glutamyl-[protein] + L-leucyl-tRNA(Leu) = N-terminal L-leucyl-L-glutamyl-[protein] + tRNA(Leu) + H(+). The catalysed reaction is N-terminal L-aspartyl-[protein] + L-leucyl-tRNA(Leu) = N-terminal L-leucyl-L-aspartyl-[protein] + tRNA(Leu) + H(+). Functions in the N-end rule pathway of protein degradation where it conjugates Leu from its aminoacyl-tRNA to the N-termini of proteins containing an N-terminal aspartate or glutamate. The chain is Aspartate/glutamate leucyltransferase from Stenotrophomonas maltophilia (strain K279a).